A 420-amino-acid chain; its full sequence is MTEFCAPKGVPDYVPPDSAQFVAVRDGLLTAARRAGYGHIELPIFEDTALFARGVGESTDVVSKEMYTFADRGDRSVTLRPEGTAGVVRAVIEHGLDRGALPVKLCYAGPFFRYERPQAGRYRQLQQVGVEAIGVDDPALDAEVIAIADAGFRSLGLDGFRLEVTSLGDETCRPQYRELLQEFLFGLDLDDDTRRRAALNPLRVLDDKRPEVRAMTAEAPVLLDHLSDVAKQHFDTVLAHLDALRVPYVINPRMVRGLDYYTKTTFEFVHDGLGAQSGIGGGGRYDGLMKQLGGQDLSGIGFGLGVDRTMLALRAEGKSVGESARCDVFGVPLSEQAKLTLAVLAGQLRASGVRVDLAYGDRGLKGAMRAADRSGARVALVAGDRDIEAGTVGVKDLGTGEQVSVSTDSVVDDVISKLGR.

This sequence belongs to the class-II aminoacyl-tRNA synthetase family. As to quaternary structure, homodimer.

The protein resides in the cytoplasm. The enzyme catalyses tRNA(His) + L-histidine + ATP = L-histidyl-tRNA(His) + AMP + diphosphate + H(+). This is Histidine--tRNA ligase from Mycobacterium marinum (strain ATCC BAA-535 / M).